The chain runs to 275 residues: Thymidylate synthase (275 aa).

138 to 139 contacts dUMP; the sequence is RR. The Nucleophile role is filled by Cys158. DUMP is bound by residues 178–181, Asn189, and 219–221; these read RSCD and HIY. Residue Asp181 coordinates (6R)-5,10-methylene-5,6,7,8-tetrahydrofolate. (6R)-5,10-methylene-5,6,7,8-tetrahydrofolate is bound at residue Ala274.

This sequence belongs to the thymidylate synthase family. Bacterial-type ThyA subfamily. As to quaternary structure, homodimer.

The protein localises to the cytoplasm. It catalyses the reaction dUMP + (6R)-5,10-methylene-5,6,7,8-tetrahydrofolate = 7,8-dihydrofolate + dTMP. Its pathway is pyrimidine metabolism; dTTP biosynthesis. Catalyzes the reductive methylation of 2'-deoxyuridine-5'-monophosphate (dUMP) to 2'-deoxythymidine-5'-monophosphate (dTMP) while utilizing 5,10-methylenetetrahydrofolate (mTHF) as the methyl donor and reductant in the reaction, yielding dihydrofolate (DHF) as a by-product. This enzymatic reaction provides an intracellular de novo source of dTMP, an essential precursor for DNA biosynthesis. The polypeptide is Thymidylate synthase (Fusobacterium nucleatum subsp. nucleatum (strain ATCC 25586 / DSM 15643 / BCRC 10681 / CIP 101130 / JCM 8532 / KCTC 2640 / LMG 13131 / VPI 4355)).